A 74-amino-acid polypeptide reads, in one-letter code: Consomatin Ma1 (74 aa).

The N-terminal stretch at 1–22 (MQTAYWVMVMMMVWITAPLSEG) is a signal peptide. A propeptide spanning residues 23 to 57 (GKLNGEIRGLVSHILIPQHTLRSLTSRDRSDNGGS) is cleaved from the precursor. Cysteine 63 and cysteine 68 are joined by a disulfide. Tryptophan 65 is subject to D-tryptophan. 4-hydroxyproline occurs at positions 69, 70, and 72.

Belongs to the conotoxin C superfamily. Consomatin family. Expressed by the venom duct.

The protein localises to the secreted. In terms of biological role, moderately activates human somatostatin receptors (SSTR) with a preferential activation of SSTR1 and SSTR4. In vivo, does not cause behavioral changes in mice within a few minutes of intracranial injection, but causes a progressive loss of movement thereafter. Four to five hours after injection, mice recover, even with the highest dose tested. Shows antinociception and antihyperalgesia activities in two mouse models of acute pain, most probably by acting outside the central nervous system. This chain is Consomatin Ma1, found in Conus magus (Magical cone).